A 180-amino-acid polypeptide reads, in one-letter code: ATP synthase subunit delta (180 aa).

This sequence belongs to the ATPase delta chain family. As to quaternary structure, F-type ATPases have 2 components, F(1) - the catalytic core - and F(0) - the membrane proton channel. F(1) has five subunits: alpha(3), beta(3), gamma(1), delta(1), epsilon(1). F(0) has three main subunits: a(1), b(2) and c(10-14). The alpha and beta chains form an alternating ring which encloses part of the gamma chain. F(1) is attached to F(0) by a central stalk formed by the gamma and epsilon chains, while a peripheral stalk is formed by the delta and b chains.

The protein localises to the cell membrane. In terms of biological role, f(1)F(0) ATP synthase produces ATP from ADP in the presence of a proton or sodium gradient. F-type ATPases consist of two structural domains, F(1) containing the extramembraneous catalytic core and F(0) containing the membrane proton channel, linked together by a central stalk and a peripheral stalk. During catalysis, ATP synthesis in the catalytic domain of F(1) is coupled via a rotary mechanism of the central stalk subunits to proton translocation. Functionally, this protein is part of the stalk that links CF(0) to CF(1). It either transmits conformational changes from CF(0) to CF(1) or is implicated in proton conduction. The chain is ATP synthase subunit delta from Mycoplasma mobile (strain ATCC 43663 / 163K / NCTC 11711) (Mesomycoplasma mobile).